Reading from the N-terminus, the 215-residue chain is Cytochrome b6 (215 aa).

A helical transmembrane segment spans residues 32–52 (IFYCIGGITFTCFLVQVATGF). C35 serves as a coordination point for heme c. The heme b site is built by H86 and H100. 3 helical membrane passes run 90-110 (ASMMVLMMILHVCRVYLTGGF), 116-136 (LTWVTGVIMAVCTVSFGVTGY), and 186-206 (LHTFVLPLATAVFMLMHFLMI). Positions 187 and 202 each coordinate heme b.

Belongs to the cytochrome b family. PetB subfamily. The 4 large subunits of the cytochrome b6-f complex are cytochrome b6, subunit IV (17 kDa polypeptide, PetD), cytochrome f and the Rieske protein, while the 4 small subunits are PetG, PetL, PetM and PetN. The complex functions as a dimer. Heme b is required as a cofactor. Heme c serves as cofactor.

It is found in the plastid. Its subcellular location is the chloroplast thylakoid membrane. Its function is as follows. Component of the cytochrome b6-f complex, which mediates electron transfer between photosystem II (PSII) and photosystem I (PSI), cyclic electron flow around PSI, and state transitions. The protein is Cytochrome b6 of Chlorella vulgaris (Green alga).